A 57-amino-acid chain; its full sequence is MLKWAIIFFVISLIAGFFGFSGVSAATATIARVLFAIFLIVFLVFLILAVMAGNAVL.

The next 2 helical transmembrane spans lie at Trp-4–Ser-24 and Val-33–Gly-53.

It belongs to the UPF0391 family.

The protein resides in the cell membrane. The polypeptide is UPF0391 membrane protein Arad_3976 (Rhizobium rhizogenes (strain K84 / ATCC BAA-868) (Agrobacterium radiobacter)).